A 175-amino-acid chain; its full sequence is ATP synthase subunit delta (175 aa).

It belongs to the ATPase delta chain family. As to quaternary structure, F-type ATPases have 2 components, F(1) - the catalytic core - and F(0) - the membrane proton channel. F(1) has five subunits: alpha(3), beta(3), gamma(1), delta(1), epsilon(1). F(0) has three main subunits: a(1), b(2) and c(10-14). The alpha and beta chains form an alternating ring which encloses part of the gamma chain. F(1) is attached to F(0) by a central stalk formed by the gamma and epsilon chains, while a peripheral stalk is formed by the delta and b chains.

The protein resides in the cell membrane. Its function is as follows. F(1)F(0) ATP synthase produces ATP from ADP in the presence of a proton or sodium gradient. F-type ATPases consist of two structural domains, F(1) containing the extramembraneous catalytic core and F(0) containing the membrane proton channel, linked together by a central stalk and a peripheral stalk. During catalysis, ATP synthesis in the catalytic domain of F(1) is coupled via a rotary mechanism of the central stalk subunits to proton translocation. In terms of biological role, this protein is part of the stalk that links CF(0) to CF(1). It either transmits conformational changes from CF(0) to CF(1) or is implicated in proton conduction. This Lactococcus lactis subsp. cremoris (strain MG1363) protein is ATP synthase subunit delta.